The primary structure comprises 548 residues: MFQLTRSVTWRALERLKQETFDDRISDYFAADPQRFEKMSLRVGGLFLDYSKHHVSDAVLAKLIELADHSALVQRRAQMFSGDIINVTEDRPVLHTALRHLGDEPVYADGKDVMPEIQSTREQIKRFSEAVRSGEWKGYSGERIKDVVNIGIGGSDLGPNMACRALLKYRHPELNFHFVSNVDGTHIQKVLQRLDPATTLFIVSTKTFSTQETLLNAKTARRWFLDNAGEDADVGAHFIAASTNRKAAMEFGIREENVFEFWAWVGGRYSMWSSIGLPIALSIGFDGFMELLEGAHEMDRHFIEAPFAENMPVLMALIGIWYINFIGAETHAIVPYDQALHQLPSFLQQLDMESNGKSVDIFDQPVNYKTGPIVWGQTGSNGQHAFFQLLHQGTRYVPIDFIASLKPEPGFEDHHFALLTNMLAQANAFMEGSQDGSQLDPYSCPGNRPSSTLLLDELTPRNLGALIALYEHKVFVQGVIWNINSFDQWGVQLGKRIAGEISERIDTNVGDFDASTQGLLSLVREYFPASTPDAKASDNNKKSRGKTS.

Glutamate 353 functions as the Proton donor in the catalytic mechanism. Residues histidine 384 and lysine 495 contribute to the active site.

Belongs to the GPI family.

It localises to the cytoplasm. It carries out the reaction alpha-D-glucose 6-phosphate = beta-D-fructose 6-phosphate. It participates in carbohydrate biosynthesis; gluconeogenesis. Its pathway is carbohydrate degradation; glycolysis; D-glyceraldehyde 3-phosphate and glycerone phosphate from D-glucose: step 2/4. Catalyzes the reversible isomerization of glucose-6-phosphate to fructose-6-phosphate. This chain is Glucose-6-phosphate isomerase 1, found in Chromohalobacter salexigens (strain ATCC BAA-138 / DSM 3043 / CIP 106854 / NCIMB 13768 / 1H11).